The following is a 193-amino-acid chain: UPF0301 protein Fphi_1754 (193 aa).

Belongs to the UPF0301 (AlgH) family.

This Francisella philomiragia subsp. philomiragia (strain ATCC 25017 / CCUG 19701 / FSC 153 / O#319-036) protein is UPF0301 protein Fphi_1754.